Consider the following 443-residue polypeptide: Xaa-Pro dipeptidase (443 aa).

The Mn(2+) site is built by aspartate 246, aspartate 257, histidine 339, glutamate 384, and glutamate 423.

The protein belongs to the peptidase M24B family. Bacterial-type prolidase subfamily. Mn(2+) is required as a cofactor.

The enzyme catalyses Xaa-L-Pro dipeptide + H2O = an L-alpha-amino acid + L-proline. Its function is as follows. Splits dipeptides with a prolyl residue in the C-terminal position. This chain is Xaa-Pro dipeptidase, found in Yersinia pseudotuberculosis serotype I (strain IP32953).